The chain runs to 319 residues: Methionyl-tRNA formyltransferase (319 aa).

Ser-112–Pro-115 is a (6S)-5,6,7,8-tetrahydrofolate binding site.

It belongs to the Fmt family.

The catalysed reaction is L-methionyl-tRNA(fMet) + (6R)-10-formyltetrahydrofolate = N-formyl-L-methionyl-tRNA(fMet) + (6S)-5,6,7,8-tetrahydrofolate + H(+). Its function is as follows. Attaches a formyl group to the free amino group of methionyl-tRNA(fMet). The formyl group appears to play a dual role in the initiator identity of N-formylmethionyl-tRNA by promoting its recognition by IF2 and preventing the misappropriation of this tRNA by the elongation apparatus. The sequence is that of Methionyl-tRNA formyltransferase from Shewanella denitrificans (strain OS217 / ATCC BAA-1090 / DSM 15013).